The chain runs to 792 residues: MAAINPWASWGALTDQSWGMTAVDPWASWALCPQYPAWHVEGSLEEGRRATGLPAAQVQEPVTFKDVAVDFTQEEWGQLDLVQRTLYRDVMLETYGHLLSVGNQIAKPEVISLLEQGEEPWSVEQACPQRTCPEWVRNLESKALIPAQSIFEEEQSHGMKLERYIWDDPWFSRLEVLGCKDQLEMYHMNQSTAMRQMVFMQKQVLSQRSSEFCGLGAEFSQNLNFVPSQRVSQIEHFYKPDTHAQSWRCDSAIMYADKVTCENNDYDKTVYQSIQPIYPARIQTGDNLFKCTDAVKSFNHIIHFGDHKGIHTGEKLYEYKECHQIFNQSPSFNEHPRLHVGENQYNYKEYENIFYFSSFMEHQKIGTVEKAYKYNEWEKVFGYDSFLTQHTSTYTAEKPYDYNECGTSFIWSSYLIQHKKTHTGEKPYECDKCGKVFRNRSALTKHERTHTGIKPYECNKCGKAFSWNSHLIVHKRIHTGEKPYVCNECGKSFNWNSHLIGHQRTHTGEKPFECTECGKSFSWSSHLIAHMRMHTGEKPFKCDECEKAFRDYSALSKHERTHSGAKPYKCTECGKSFSWSSHLIAHQRTHTGEKPYNCQECGKAFRERSALTKHEIIHSGIKPYECNKCGKSCSQMAHLVRHQRTHTGEKPYECNKCGKSFSQSCHLVAHRRIHTGEKPYKCNQCERSFNCSSHLIAHRRTHTGEKPYRCNECGKAFNESSSLIVHLRNHTGEKPYKCNHCEKAFCKNSSLIIHQRMHSGEKRFICSECGKAFSGHSALLQHQRNHSEEKLN.

Positions 62–133 constitute a KRAB domain; sequence VTFKDVAVDF…EQACPQRTCP (72 aa). Residues 289-311 form a C2H2-type 1; degenerate zinc finger; that stretch reads FKCTDAVKSFNHIIHFGDHKGIH. The C2H2-type 2; degenerate zinc finger occupies 317 to 344; it reads YEYKECHQIFNQSPSFNEHPRLHVGENQ. The C2H2-type 3; degenerate zinc-finger motif lies at 400–422; it reads YDYNECGTSFIWSSYLIQHKKTH. C2H2-type zinc fingers lie at residues 428–450, 456–478, 484–506, 512–534, 540–562, 568–590, 596–618, 624–646, 652–674, 680–702, 708–730, 736–758, and 764–786; these read YECD…ERTH, YECN…KRIH, YVCN…QRTH, FECT…MRMH, FKCD…ERTH, YKCT…QRTH, YNCQ…EIIH, YECN…QRTH, YECN…RRIH, YKCN…RRTH, YRCN…LRNH, YKCN…QRMH, and FICS…QRNH.

Belongs to the krueppel C2H2-type zinc-finger protein family. As to expression, widely expressed in adult and fetal tissues.

The protein localises to the nucleus. Functionally, may act as a transcriptional repressor. In Homo sapiens (Human), this protein is Zinc finger protein 606 (ZNF606).